The chain runs to 249 residues: MSRLRTSHALRTAAALVAVGCLASGCSSIERLSQIGEQPKLTAIDNPTTKAGYKPVSMPMPTPQPASYNPNSLWRNGSRAFFKDQRAHQVGDILTVIVNITDKANIANETQRSRANTEDSSITNFFGIKKVPGTNGAGNMLTTGSVASSDGKGSVVRQEALQTNVAAVVTQLLPNGNLVVEGKQEIRVNFEMRELVVAGIVRPEDIQSDNTIDSSKIAQARIAYGGRGQITDVQQPRYGQQVMDILLPF.

Positions 1 to 25 (MSRLRTSHALRTAAALVAVGCLASG) are cleaved as a signal peptide. Cys26 carries N-palmitoyl cysteine lipidation. The S-diacylglycerol cysteine moiety is linked to residue Cys26.

Belongs to the FlgH family. The basal body constitutes a major portion of the flagellar organelle and consists of four rings (L,P,S, and M) mounted on a central rod.

It localises to the cell outer membrane. Its subcellular location is the bacterial flagellum basal body. In terms of biological role, assembles around the rod to form the L-ring and probably protects the motor/basal body from shearing forces during rotation. This chain is Flagellar L-ring protein, found in Afipia carboxidovorans (strain ATCC 49405 / DSM 1227 / KCTC 32145 / OM5) (Oligotropha carboxidovorans).